Consider the following 80-residue polypeptide: Cytochrome c oxidase subunit 7A1, mitochondrial (80 aa).

Residues 1–21 constitute a mitochondrion transit peptide; that stretch reads MLAPRVSQALIRSFSSTARNR. The Mitochondrial matrix portion of the chain corresponds to 22–46; it reads LKNRVPEKQKLFQEDNGIPVYLKGG. A helical membrane pass occupies residues 47–75; that stretch reads VVDHILYRVTMGLCLGGTAYGVYCLAWAS. The Mitochondrial intermembrane segment spans residues 76-80; it reads FPRNK.

The protein belongs to the cytochrome c oxidase VIIa family. In terms of assembly, component of the complex IV (CIV, cytochrome c oxidase), a multisubunit enzyme composed of 14 subunits. The complex is composed of a catalytic core of 3 subunits MT-CO1, MT-CO2 and MT-CO3, encoded in the mitochondrial DNA, and 11 supernumerary subunits COX4I1 (or COX4I2), COX5A, COX5B, COX6A2 (or COX6A1), COX6B1 (or COX6B2), COX6C, COX7A1 (or COX7A2), COX7B, COX7C, COX8B and NDUFA4, which are encoded in the nuclear genome. The complex exists as a monomer or a dimer and forms supercomplexes (SCs) in the inner mitochondrial membrane with NADH-ubiquinone oxidoreductase (complex I, CI) and ubiquinol-cytochrome c oxidoreductase (cytochrome b-c1 complex, complex III, CIII), resulting in different assemblies (supercomplex SCI(1)III(2)IV(1) and megacomplex MCI(2)III(2)IV(2)).

It is found in the mitochondrion inner membrane. The protein operates within energy metabolism; oxidative phosphorylation. Its function is as follows. Component of the mitochondrial respiratory complex IV (CIV, also named cytochrome c oxidase complex), the last enzyme in the mitochondrial electron transport chain which drives oxidative phosphorylation. The CIV complex is the component of the respiratory chain that catalyzes the reduction of oxygen to water. Acts as an assembly factor that specifically drives the homodimerization of CIV complexes, mediating the formation of mitochondrial respiratory supercomplexes (respirasomes) containing two CIV: supercomplxes with two molecules of CIV show improved activity. Despite being highly expressed in brown adipose tissue, not required for thermogenesis. This is Cytochrome c oxidase subunit 7A1, mitochondrial (COX7A1) from Saimiri sciureus (Common squirrel monkey).